Consider the following 418-residue polypeptide: Serine hydroxymethyltransferase 2 (418 aa).

(6S)-5,6,7,8-tetrahydrofolate contacts are provided by residues Leu121 and 125-127 (GHL). Lys230 carries the post-translational modification N6-(pyridoxal phosphate)lysine. 355 to 357 (SPF) serves as a coordination point for (6S)-5,6,7,8-tetrahydrofolate.

It belongs to the SHMT family. As to quaternary structure, homodimer. Pyridoxal 5'-phosphate serves as cofactor.

Its subcellular location is the cytoplasm. The catalysed reaction is (6R)-5,10-methylene-5,6,7,8-tetrahydrofolate + glycine + H2O = (6S)-5,6,7,8-tetrahydrofolate + L-serine. It functions in the pathway one-carbon metabolism; tetrahydrofolate interconversion. It participates in amino-acid biosynthesis; glycine biosynthesis; glycine from L-serine: step 1/1. In terms of biological role, catalyzes the reversible interconversion of serine and glycine with tetrahydrofolate (THF) serving as the one-carbon carrier. This reaction serves as the major source of one-carbon groups required for the biosynthesis of purines, thymidylate, methionine, and other important biomolecules. Also exhibits THF-independent aldolase activity toward beta-hydroxyamino acids, producing glycine and aldehydes, via a retro-aldol mechanism. This Pseudomonas aeruginosa (strain ATCC 15692 / DSM 22644 / CIP 104116 / JCM 14847 / LMG 12228 / 1C / PRS 101 / PAO1) protein is Serine hydroxymethyltransferase 2.